We begin with the raw amino-acid sequence, 109 residues long: MAATALAARTRQAVWSVWAMQGRGFGSESGDNVRSSAGAVRDAGGAFGKREQAEEERYFRARAKEQLAALKKHHENEISHHAKEIERLQKEIERHKQSIKKLKQSEDDD.

Residues 1-25 (MAATALAARTRQAVWSVWAMQGRGF) constitute a mitochondrion transit peptide. The segment at 26-52 (GSESGDNVRSSAGAVRDAGGAFGKREQ) is disordered. The N-terminal inhibitory region stretch occupies residues 26-52 (GSESGDNVRSSAGAVRDAGGAFGKREQ). The stretch at 69 to 109 (ALKKHHENEISHHAKEIERLQKEIERHKQSIKKLKQSEDDD) forms a coiled coil. Positions 74–106 (HENEISHHAKEIERLQKEIERHKQSIKKLKQSE) are antiparallel alpha-helical coiled coil region. Position 103 is an N6-succinyllysine (Lys103).

The protein belongs to the ATPase inhibitor family. As to quaternary structure, homodimer; represents the active form and is present at a pH value below 6.5. Homotetramer; represents the inactive form and is present at a pH value above 7.0.

It localises to the mitochondrion. Functionally, endogenous F(1)F(o)-ATPase inhibitor limiting ATP depletion when the mitochondrial membrane potential falls below a threshold and the F(1)F(o)-ATP synthase starts hydrolyzing ATP to pump protons out of the mitochondrial matrix. Required to avoid the consumption of cellular ATP when the F(1)F(o)-ATP synthase enzyme acts as an ATP hydrolase. Indirectly acts as a regulator of heme synthesis in erythroid tissues: regulates heme synthesis by modulating the mitochondrial pH and redox potential, allowing FECH to efficiently catalyze the incorporation of iron into protoporphyrin IX to produce heme. The polypeptide is ATPase inhibitor, mitochondrial (Bos taurus (Bovine)).